A 432-amino-acid chain; its full sequence is Adenylosuccinate synthetase (432 aa).

GTP is bound by residues 13 to 19 (GDEGKGK) and 41 to 43 (GHT). D14 serves as the catalytic Proton acceptor. Positions 14 and 41 each coordinate Mg(2+). IMP-binding positions include 14–17 (DEGK), 39–42 (NAGH), T130, R144, Q225, T240, and R304. H42 serves as the catalytic Proton donor. 300–306 (ATTGRKR) provides a ligand contact to substrate. Residues R306, 332–334 (KLD), and 415–417 (STG) each bind GTP.

Belongs to the adenylosuccinate synthetase family. Homodimer. Requires Mg(2+) as cofactor.

It is found in the cytoplasm. It carries out the reaction IMP + L-aspartate + GTP = N(6)-(1,2-dicarboxyethyl)-AMP + GDP + phosphate + 2 H(+). It participates in purine metabolism; AMP biosynthesis via de novo pathway; AMP from IMP: step 1/2. Plays an important role in the de novo pathway of purine nucleotide biosynthesis. Catalyzes the first committed step in the biosynthesis of AMP from IMP. The sequence is that of Adenylosuccinate synthetase from Photobacterium profundum (strain SS9).